A 309-amino-acid polypeptide reads, in one-letter code: Ribonuclease Z (309 aa).

The Zn(2+) site is built by His64, His66, Asp68, His69, His141, Asp209, and His267. Asp68 serves as the catalytic Proton acceptor.

This sequence belongs to the RNase Z family. Homodimer. Zn(2+) serves as cofactor.

The enzyme catalyses Endonucleolytic cleavage of RNA, removing extra 3' nucleotides from tRNA precursor, generating 3' termini of tRNAs. A 3'-hydroxy group is left at the tRNA terminus and a 5'-phosphoryl group is left at the trailer molecule.. In terms of biological role, zinc phosphodiesterase, which displays some tRNA 3'-processing endonuclease activity. Probably involved in tRNA maturation, by removing a 3'-trailer from precursor tRNA. This is Ribonuclease Z from Picrophilus torridus (strain ATCC 700027 / DSM 9790 / JCM 10055 / NBRC 100828 / KAW 2/3).